The sequence spans 331 residues: XylDLEGF operon transcriptional activator 1 (331 aa).

Residues 214 to 315 form the HTH araC/xylS-type domain; the sequence is ERVVQFIEEN…GELPSDTLRR (102 aa). 2 DNA-binding regions (H-T-H motif) span residues 231–252 and 282–305; these read ERLAELALMSPRSLYTLFEKHA and VTEMALDYGFFHTGRFAENYRSTF.

It localises to the cytoplasm. Regulatory protein of the TOL plasmid xyl operons. XylS activates the xylXYZLTEGFJQKIH operon required for the degradation of toluene, m-xylene and p-xylene. The protein is XylDLEGF operon transcriptional activator 1 (xylS1) of Pseudomonas putida (Arthrobacter siderocapsulatus).